Reading from the N-terminus, the 24-residue chain is Prokineticin 1-like protein (24 aa).

C7 and C19 are disulfide-bonded.

As to expression, expressed by the skin glands.

Its subcellular location is the secreted. In terms of biological role, stimulates insulin secretion by BRIN-BD11 cells in vitro. This chain is Prokineticin 1-like protein, found in Pelophylax saharicus (Sahara frog).